Consider the following 201-residue polypeptide: Mediator of RNA polymerase II transcription subunit 22 (201 aa).

The stretch at 93–123 (SVNEAIDQRNQQLRALQEECDRKLIALRDEV) forms a coiled coil. The disordered stretch occupies residues 166 to 201 (LSAPLLASPEPSAGGPLQAAAPTHSHAGGPGPTEHA).

As to quaternary structure, component of the Mediator complex, which is composed of MED1, MED4, MED6, MED7, MED8, MED9, MED10, MED11, MED12, MED13, MED13L, MED14, MED15, MED16, MED17, MED18, MED19, MED20, MED21, MED22, MED23, MED24, MED25, MED26, MED27, MED29, MED30, MED31, CCNC, CDK8 and CDC2L6/CDK11. The MED12, MED13, CCNC and CDK8 subunits form a distinct module termed the CDK8 module. Mediator containing the CDK8 module is less active than Mediator lacking this module in supporting transcriptional activation. Individual preparations of the Mediator complex lacking one or more distinct subunits have been variously termed ARC, CRSP, DRIP, PC2, SMCC and TRAP.

It is found in the nucleus. Its function is as follows. Component of the Mediator complex, a coactivator involved in the regulated transcription of nearly all RNA polymerase II-dependent genes. Mediator functions as a bridge to convey information from gene-specific regulatory proteins to the basal RNA polymerase II transcription machinery. Mediator is recruited to promoters by direct interactions with regulatory proteins and serves as a scaffold for the assembly of a functional preinitiation complex with RNA polymerase II and the general transcription factors. The polypeptide is Mediator of RNA polymerase II transcription subunit 22 (MED22) (Bos taurus (Bovine)).